Here is a 295-residue protein sequence, read N- to C-terminus: Proline iminopeptidase (295 aa).

The AB hydrolase-1 domain occupies 29–279; it reads PLLLLHGGPG…GCGHMPFVQE (251 aa). Ser107 (nucleophile) is an active-site residue. Asp246 is a catalytic residue. His273 functions as the Proton donor in the catalytic mechanism.

It belongs to the peptidase S33 family.

Its subcellular location is the cell envelope. The enzyme catalyses Release of N-terminal proline from a peptide.. Releases the N-terminal proline from various substrates. The sequence is that of Proline iminopeptidase from Lactobacillus delbrueckii subsp. bulgaricus (strain ATCC 11842 / DSM 20081 / BCRC 10696 / JCM 1002 / NBRC 13953 / NCIMB 11778 / NCTC 12712 / WDCM 00102 / Lb 14).